Consider the following 169-residue polypeptide: Gametocyte-specific factor 1-like (169 aa).

2 consecutive CHHC U11-48K-type zinc fingers follow at residues 6 to 33 and 40 to 67; these read LETC…RRKN and MASC…VNKS. Zn(2+)-binding residues include C9, H15, H25, C29, C43, H49, H59, and C63. Disordered stretches follow at residues 67 to 103 and 131 to 169; these read STME…LPNP and SDTR…LLKA. The segment covering 131–158 has biased composition (basic and acidic residues); it reads SDTRESETDDHNPIPDCPRRRSSDRESE.

This sequence belongs to the UPF0224 (FAM112) family.

This Bos taurus (Bovine) protein is Gametocyte-specific factor 1-like (GTSF1L).